Reading from the N-terminus, the 729-residue chain is Golgin subfamily A member 5 (729 aa).

The residue at position 2 (S2) is an N-acetylserine. Residues 2-696 (SWFADLAGRA…IFLRRYPIAR (695 aa)) are Cytoplasmic-facing. 2 positions are modified to dimethylated arginine: R27 and R89. Disordered stretches follow at residues 89–222 (RTVG…SQEL) and 626–645 (SASS…VDSG). Residue S116 is modified to Phosphoserine. Residues 134–146 (PTGRVEVKKEKGR) are compositionally biased toward basic and acidic residues. The span at 148–167 (PVSPSSPSGVSSVNTSVTTT) shows a compositional bias: low complexity. 2 stretches are compositionally biased toward polar residues: residues 175 to 186 (GSQSPGVNSSDS) and 626 to 638 (SASS…SAIN). The stretch at 215 to 629 (GSSRSQELSN…LEQQVHSASS (415 aa)) forms a coiled coil. Residues 697-717 (VFVIIYMALLHLWVMIVLLTY) traverse the membrane as a helical; Anchor for type IV membrane protein segment. The Lumenal segment spans residues 718–729 (SPEMHHDQPYGK).

As to quaternary structure, homodimer. Interacts with RAB1A that has been activated by GTP-binding. Interacts with isoform CASP of CUX1. Post-translationally, highly phosphorylated during mitosis. Phosphorylation is barely detectable during interphase.

It localises to the golgi apparatus membrane. Involved in maintaining Golgi structure. Stimulates the formation of Golgi stacks and ribbons. Involved in intra-Golgi retrograde transport. The polypeptide is Golgin subfamily A member 5 (Golga5) (Mus musculus (Mouse)).